Here is a 507-residue protein sequence, read N- to C-terminus: Congo red hypersensitive protein 1 (507 aa).

The first 22 residues, 1–22, serve as a signal peptide directing secretion; that stretch reads MKVLDLLTVLSASSLLSTFAAA. One can recognise a GH16 domain in the interval 34–260; it reads ASSTASCNPL…KVIVTDYSTG (227 aa). Cysteines 40 and 48 form a disulfide. Residue Asn-117 is glycosylated (N-linked (GlcNAc...) asparagine). The active-site Nucleophile is Glu-134. Glu-138 serves as the catalytic Proton donor. Glu-138 contributes to the chitin binding site. N-linked (GlcNAc...) asparagine glycans are attached at residues Asn-177 and Asn-201. Residues Trp-219 and Thr-230 each coordinate chitin. 2 disordered regions span residues 329–368 and 381–478; these read SSSA…SSKT and SSFE…TNSV. 2 stretches are compositionally biased toward low complexity: residues 381 to 439 and 451 to 477; these read SSFE…PVQD and TSST…STNS. Asn-482 carries GPI-anchor amidated asparagine lipidation. The propeptide at 483 to 507 is removed in mature form; sequence GADLAQSLPREGKLFSVLVALLALL.

It belongs to the glycosyl hydrolase 16 family. CRH1 subfamily. The GPI-anchor is attached to the protein in the endoplasmic reticulum and serves to target the protein to the cell surface. There, the glucosamine-inositol phospholipid moiety is cleaved off and the GPI-modified mannoprotein is covalently attached via its lipidless GPI glycan remnant to the 1,6-beta-glucan of the outer cell wall layer.

It localises to the secreted. The protein resides in the cell wall. It is found in the membrane. It catalyses the reaction Random endo-hydrolysis of N-acetyl-beta-D-glucosaminide (1-&gt;4)-beta-linkages in chitin and chitodextrins.. Functionally, dual chitinase/transglycosylase that plays a role in cell wall architecture. Chitinase and transglycosylase activities are coupled. Required for the polysaccharide cross-linking at the septa and the cell wall. More specifically, transfers chitin to both beta(1-3)- and beta(1-6)glucan in the cell wall. The minimal number of intact hexopyranose units required in the molecule of the acceptor oligosaccharide is two and the effectivity of the acceptor increased with the increasing length of its oligosaccharide chain. The chain is Congo red hypersensitive protein 1 from Saccharomyces cerevisiae (strain ATCC 204508 / S288c) (Baker's yeast).